A 456-amino-acid chain; its full sequence is tRNA modification GTPase MnmE (456 aa).

3 residues coordinate (6S)-5-formyl-5,6,7,8-tetrahydrofolate: Arg-25, Glu-87, and Arg-126. A TrmE-type G domain is found at 221–377; that stretch reads GLKVAIVGQP…LENAIIEQVN (157 aa). Residue Asn-231 participates in K(+) binding. Residues 231 to 236, 250 to 256, and 275 to 278 each bind GTP; these read NVGKSS, TDLPGTT, and DTAG. Residue Ser-235 participates in Mg(2+) binding. Positions 250, 252, and 255 each coordinate K(+). Position 256 (Thr-256) interacts with Mg(2+). Lys-456 is a binding site for (6S)-5-formyl-5,6,7,8-tetrahydrofolate.

Belongs to the TRAFAC class TrmE-Era-EngA-EngB-Septin-like GTPase superfamily. TrmE GTPase family. As to quaternary structure, homodimer. Heterotetramer of two MnmE and two MnmG subunits. Requires K(+) as cofactor.

Its subcellular location is the cytoplasm. Functionally, exhibits a very high intrinsic GTPase hydrolysis rate. Involved in the addition of a carboxymethylaminomethyl (cmnm) group at the wobble position (U34) of certain tRNAs, forming tRNA-cmnm(5)s(2)U34. The sequence is that of tRNA modification GTPase MnmE from Synechocystis sp. (strain ATCC 27184 / PCC 6803 / Kazusa).